Reading from the N-terminus, the 94-residue chain is MRAFAVLLIIALGWLQYTLWFGKNGMEDYAQVSNDVQLQEEVNQGLRNRNGQMFAEIDDLRKGSAAIEERARHELGMIKKGETFYRIIDENSEE.

Over Met-1 to Ala-3 the chain is Cytoplasmic. The helical transmembrane segment at Phe-4–Phe-21 threads the bilayer. The Periplasmic portion of the chain corresponds to Gly-22 to Glu-94. Residues Glu-40–Leu-60 are a coiled coil.

It belongs to the FtsB family. In terms of assembly, part of a complex composed of FtsB, FtsL and FtsQ.

The protein resides in the cell inner membrane. Its function is as follows. Essential cell division protein. May link together the upstream cell division proteins, which are predominantly cytoplasmic, with the downstream cell division proteins, which are predominantly periplasmic. The chain is Cell division protein FtsB from Aliivibrio salmonicida (strain LFI1238) (Vibrio salmonicida (strain LFI1238)).